We begin with the raw amino-acid sequence, 200 residues long: MGQEFSWEEAEAAGEIDVAELQEWYKKFVMECPSGTLFMHEFKRFFKVTDDEEASQYVEGMFRAFDKNGDNTIDFLEYVAALNLVLRGTLEHKLKWTFKIYDKDGNGCIDRLELLNIVEGIYQLKKACRRELQTEQGQLLTPEEVVDRIFLLVDENGDGQLSLNEFVEGARRDKWVMKMLQMDMNPSSWLAQQRRKSAMF.

A lipid anchor (N-myristoyl glycine) is attached at glycine 2. EF-hand domains are found at residues 14–31 (GEIDVAELQEWYKKFVME), 53–88 (EASQYVEGMFRAFDKNGDNTIDFLEYVAALNLVLRG), 89–124 (TLEHKLKWTFKIYDKDGNGCIDRLELLNIVEGIYQL), and 141–176 (TPEEVVDRIFLLVDENGDGQLSLNEFVEGARRDKWV). Ca(2+)-binding residues include aspartate 66, asparagine 68, aspartate 70, threonine 72, glutamate 77, aspartate 102, aspartate 104, asparagine 106, cysteine 108, glutamate 113, aspartate 154, asparagine 156, aspartate 158, glutamine 160, and glutamate 165.

The N-terminus is blocked. As to expression, in the retina, it is expressed in cone and rod photoreceptor cells.

The protein localises to the cell membrane. The protein resides in the photoreceptor inner segment. It localises to the cell projection. Its subcellular location is the cilium. It is found in the photoreceptor outer segment. In terms of biological role, stimulates two retinal guanylyl cyclases (GCs) GUCY2D and GUCY2F when free calcium ions concentration is low, and inhibits GUCY2D and GUCY2F when free calcium ions concentration is elevated. This Ca(2+)-sensitive regulation of GCs is a key event in recovery of the dark state of rod photoreceptors following light exposure. May be involved in cone photoreceptor response and recovery of response in bright light. The sequence is that of Guanylyl cyclase-activating protein 2 (GUCA1B) from Homo sapiens (Human).